Here is a 282-residue protein sequence, read N- to C-terminus: Large ribosomal subunit protein uL2 (282 aa).

The disordered stretch occupies residues 215–282 (RHKGIRPTVR…IIRSRKETKK (68 aa)). A compositionally biased stretch (basic residues) spans 263 to 282 (RNPKKPSTKLIIRSRKETKK).

The protein belongs to the universal ribosomal protein uL2 family. As to quaternary structure, part of the 50S ribosomal subunit. Forms a bridge to the 30S subunit in the 70S ribosome.

In terms of biological role, one of the primary rRNA binding proteins. Required for association of the 30S and 50S subunits to form the 70S ribosome, for tRNA binding and peptide bond formation. It has been suggested to have peptidyltransferase activity; this is somewhat controversial. Makes several contacts with the 16S rRNA in the 70S ribosome. This is Large ribosomal subunit protein uL2 from Mesomycoplasma hyopneumoniae (strain J / ATCC 25934 / NCTC 10110) (Mycoplasma hyopneumoniae).